Here is a 511-residue protein sequence, read N- to C-terminus: Phosphoenolpyruvate carboxylase (511 aa).

It belongs to the PEPCase type 2 family. Homotetramer. The cofactor is Mg(2+).

It carries out the reaction oxaloacetate + phosphate = phosphoenolpyruvate + hydrogencarbonate. In terms of biological role, catalyzes the irreversible beta-carboxylation of phosphoenolpyruvate (PEP) to form oxaloacetate (OAA), a four-carbon dicarboxylic acid source for the tricarboxylic acid cycle. The protein is Phosphoenolpyruvate carboxylase of Saccharolobus islandicus (strain M.16.27) (Sulfolobus islandicus).